Reading from the N-terminus, the 467-residue chain is Gamma-aminobutyric acid receptor subunit gamma-3 (467 aa).

Positions 1–17 are cleaved as a signal peptide; the sequence is MAPKLLLLLCLFSGLHA. The Extracellular segment spans residues 18-256; the sequence is RSRKVEEDEY…FELSRRMGYF (239 aa). N110 is a glycosylation site (N-linked (GlcNAc...) asparagine). The cysteines at positions 171 and 185 are disulfide-linked. N-linked (GlcNAc...) asparagine glycosylation is present at N228. The chain crosses the membrane as a helical span at residues 257-277; sequence TIQTYIPCILTVVLSWVSFWI. Residues 278–283 are Cytoplasmic-facing; it reads KKDATP. The helical transmembrane segment at 284–303 threads the bilayer; sequence ARTALGITTVLTMTTLSTIA. Over 304–311 the chain is Extracellular; sequence RKSLPRVS. A helical membrane pass occupies residues 312–332; it reads YVTAMDLFVTVCFLFVFAALM. The Cytoplasmic segment spans residues 333-446; it reads EYATLNYYSS…DILELDSYSR (114 aa). The chain crosses the membrane as a helical span at residues 447 to 467; the sequence is VFFPTSFLLFNLVYWVGYLYL.

It belongs to the ligand-gated ion channel (TC 1.A.9) family. Gamma-aminobutyric acid receptor (TC 1.A.9.5) subfamily. GABRG3 sub-subfamily. As to quaternary structure, heteropentamer, formed by a combination of alpha (GABRA1-6), beta (GABRB1-3), gamma (GABRG1-3), delta (GABRD), epsilon (GABRE), rho (GABRR1-3), pi (GABRP) and theta (GABRQ) chains, each subunit exhibiting distinct physiological and pharmacological properties. In terms of processing, may be palmitoylated. As to expression, expressed in brain.

The protein localises to the postsynaptic cell membrane. It localises to the cell membrane. The catalysed reaction is chloride(in) = chloride(out). Gamma subunit of the heteropentameric ligand-gated chloride channel gated by gamma-aminobutyric acid (GABA), a major inhibitory neurotransmitter in the brain. GABA-gated chloride channels, also named GABA(A) receptors (GABAAR), consist of five subunits arranged around a central pore and contain GABA active binding site(s) located at the alpha and beta subunit interface(s). When activated by GABA, GABAARs selectively allow the flow of chloride across the cell membrane down their electrochemical gradient. The protein is Gamma-aminobutyric acid receptor subunit gamma-3 of Homo sapiens (Human).